Reading from the N-terminus, the 1507-residue chain is MSTSVQRMSRSYHCINMSATPQAGHLNPAQQQTHQQHKRKCRDLGRRLIPARLLLGVIVAISLLSPALALHSPPDKNFSGDNRKPAFKNCAGYAPKVKEEQPENTYVLTVEAVDPDPDQVIRYSIVQSPFERPKFFINPSTGVIFTTHTFDRDEPIHEKFVFVTVQATDNGLPPLDDVCTFNVTIEDINDNAPAFNKARYDESMSENAQPDAVVMTISASDFDDGNNSLVEYEILRERDFQYFKIDKESGIIYLKRPIDKRPGQSYAIIVRAYNVVPDPPQDAQIEVRIRVVESSIKPPSFVNPIDTPIYLKENLKNFTHPIATLRAVSNMPDKPEVIFELNTGRTEQTNSKNTFVFNQIGNEVTISLGKTLDYEAITDYTLTMIVRNTHELGTEHQIKIQVEDVNDNIPYYTEVKSGTILENEPPGTPVMQVRAFDMDGTSANNIVSFELADNREYFTIDPNTGNITALTTFDREERDFYNVKVIASDNSPSSLFDNGEPNRGHQVFRISIGDKNDHKPHFQQDKYLAERLLEDANTNTEVIEVKAEDEDNASQILYSIESGNVGDAFKIGLKTGKITVNQKLDYETITEYELKVRAFDGIYDDYTTVVIKIEDVNDNPPVFKQDYSVTILEETTYDDCILTVEAYDPDIKDRNADQHIVYSIHQNDGNRWTIDNSGCLRLVKTLDRDPPNGHKNWQVLIKANDEDGVGTTVSTVKEVTVTLKDINDNAPFLINEMPVYWQENRNPGHVVQLQANDYDDTPGAGNFTFGIDSEATPDIKTKFSMDGDYLHANVQFDREAQKEYFIPIRISDSGVPRQSAVSILHLVIGDVNDNAMSEGSSRIFIYNYKGEAPETDIGRVFVDDLDDWDLEDKYFEWKDLPHDQFRLNPSTGMITMLVHTAEGEYDLSFVVTEDSMFVPRHSVDAYVTVVVRELPEEAVDKSGSIRFINVTKEEFISVPRDFQSPDALSLKDRLQLSLAKLFNTSVSNVDVFTVLQNENHTLDVRFSAHGSPYYAPEKLNGIVAQNQQRLENELDLQMLMVNIDECLIEKFKCEESCTNELHKSSVPYMIYSNTTSFVGVNAFVQAQCVCEAPLMRRCLNGGSPRYGENDVCDCIDGFTGPHCELVSVAFYGSGYAFYEPIAACNNTKISLEITPQIDQGLIMYLGPLNFNPLLAISDFLALELDNGYPVLTVDYGSGAIRIRHQHIKMVADRTYQLDIILQRTSIEMTVDNCRLSTCQTLGAPIGPNEFLNVNAPLQLGGTPVDLEQLGRQLNWTHVPNQKGFFGCIRNLTINEQTYNLGMPSVFRNIDSGCQQSVAVAFSFGIDRNFIIAIIVCLALLLIILLAVVVQKKQKNGWHEKDIDDIRETIINYEDEGGGERDTDYDLNVLRTQPFYEEKLYKDPHALQGNMRDPNDIPDIADFLGDKKENCDRDVGATTVDDVRHYAYEGDGNSDGSLSSLASCTDDGDLNFDYLSNFGPRFRKLADMYGEEPSDTDSNVDDDQGWRI.

A signal peptide spans 1 to 69 (MSTSVQRMSR…AISLLSPALA (69 aa)). The propeptide occupies 70 to 261 (LHSPPDKNFS…IYLKRPIDKR (192 aa)). Cadherin domains are found at residues 97 to 195 (VKEE…APAF), 204 to 301 (MSEN…PPSF), 311 to 412 (LKEN…IPYY), 420 to 522 (ILEN…KPHF), 532 to 633 (LLED…TILE), 631 to 733 (ILEE…APFL), and 741 to 835 (WQEN…NDNA). The Extracellular portion of the chain corresponds to 262–1328 (PGQSYAIIVR…VAFSFGIDRN (1067 aa)). N-linked (GlcNAc...) asparagine glycosylation is found at Asn-317, Asn-466, and Asn-552. N-linked (GlcNAc...) asparagine glycans are attached at residues Asn-766, Asn-949, Asn-983, Asn-999, and Asn-1073. The region spanning 1084–1123 (VQAQCVCEAPLMRRCLNGGSPRYGENDVCDCIDGFTGPHC) is the EGF-like domain. 2 disulfide bridges follow: Cys-1098/Cys-1112 and Cys-1114/Cys-1123. One can recognise a Laminin G-like domain in the interval 1125–1313 (LVSVAFYGSG…SVFRNIDSGC (189 aa)). 3 N-linked (GlcNAc...) asparagine glycosylation sites follow: Asn-1145, Asn-1274, and Asn-1290. A disulfide bond links Cys-1287 and Cys-1313. The chain crosses the membrane as a helical span at residues 1329–1349 (FIIAIIVCLALLLIILLAVVV). Over 1350–1507 (QKKQKNGWHE…NVDDDQGWRI (158 aa)) the chain is Cytoplasmic. The interaction with Inx2 stretch occupies residues 1350 to 1507 (QKKQKNGWHE…NVDDDQGWRI (158 aa)). A disordered region spans residues 1488–1507 (YGEEPSDTDSNVDDDQGWRI). Position 1493 is a phosphoserine (Ser-1493).

In terms of assembly, interacts (via cytoplasmic region) with Inx2 (via cytoplasmic loop). Interacts with Hakai. Interacts with Myo31DF. In terms of processing, N-glycosylation is important for biosynthesis and function. In terms of tissue distribution, in early stage 9 and stage 10 oocytes, expressed in border cells, strongly expressed in polar cells and very weakly expressed in the nurse cells (at protein level). In the embryo, expressed in the leading edge cells of the dorsal epidermis (at protein level). Stage 10 embryos exhibit intense expression in epithelial cells. Stage 14 embryos show expression in the hindgut (at the apical poles of cell-cell boundaries), at the apical junctions of tracheal cells and in the dorsal longitudinal trunk. In stage 16 embryos the glial midline cells of the central nervous system show strong expression.

The protein resides in the cell membrane. It is found in the apical cell membrane. Functionally, cadherins are calcium-dependent cell adhesion proteins. In connecting cells they preferentially interact with themselves in a homophilic manner; cadherins may thus contribute to the sorting of heterogeneous cell types. During oogenesis, integral component of the guidance mechanisms that regulate the directional persistent collective migration of the border cell (BC) cluster through the nurse cells to the oocyte. Functions downstream of the two chemoattractant receptors, Pvr and Egfr, to promote BC adhesion between the leader cells of the migrating cluster and the surrounding nurse cells. This adhesion increases Rac1 signaling in the leading cells, which in turn stabilizes DE-cadherin/DE-cadherin adhesions through the formation of forward-directed protrusions which attach/detach to the surrounding nurse cells in order to pull the cluster through the egg chamber to the oocyte. Within the BC cluster, also promotes adhesion between BCs, and between BCs and polar cells which enables the lead BC to communicate direction to the other cells in the cluster, providing polarity to each individual cell and ensuring collective behavior. May function in cell intercalation in the lateral epidermis during germband extension. Contributes to the determination of body left-right asymmetry by enhancing Myo31DF activity and inhibiting Myo61F activity. The chain is DE-cadherin from Drosophila melanogaster (Fruit fly).